The chain runs to 410 residues: Cytochrome P450 (410 aa).

Residue Cys-359 coordinates heme.

This sequence belongs to the cytochrome P450 family. Requires heme as cofactor.

The chain is Cytochrome P450 (cypA) from Bacillus subtilis (strain 168).